The following is a 359-amino-acid chain: Beta-1,3-galactosyltransferase bre-2 (359 aa).

Topologically, residues 1–11 (MRQSRRASSRV) are cytoplasmic. A helical; Signal-anchor for type II membrane protein membrane pass occupies residues 12–29 (NRLVVIFIIVASGFLLLY). Over 30–359 (KNTQQFTQID…NPDLEELKEK (330 aa)) the chain is Lumenal. 3 N-linked (GlcNAc...) asparagine glycosylation sites follow: asparagine 73, asparagine 163, and asparagine 209.

The protein belongs to the glycosyltransferase 31 family.

The protein resides in the golgi apparatus membrane. The protein operates within protein modification; protein glycosylation. Transfers N-acetylgalactosamine onto carbohydrate substrates. Involved in susceptibility to pore-forming crystal toxins in conjunction with bre-1, bre-3, bre-4, and bre-5. Involved in resistance to the nematotoxic C.cinerea galectin Cgl2. The polypeptide is Beta-1,3-galactosyltransferase bre-2 (Caenorhabditis elegans).